Here is a 901-residue protein sequence, read N- to C-terminus: Protein translocase subunit SecA (901 aa).

Residues Q89, 107-111 (GEGKT), and D502 contribute to the ATP site. Residues 838 to 883 (YQQQQAETEAQMHPEHEEAEGGEVSGRVAGFDETDPTTWGNPSRND) form a disordered region. Residues C885, C887, C896, and H897 each contribute to the Zn(2+) site.

This sequence belongs to the SecA family. In terms of assembly, monomer and homodimer. Part of the essential Sec protein translocation apparatus which comprises SecA, SecYEG and auxiliary proteins SecDF-YajC and YidC. The cofactor is Zn(2+).

The protein localises to the cell inner membrane. The protein resides in the cytoplasm. The catalysed reaction is ATP + H2O + cellular proteinSide 1 = ADP + phosphate + cellular proteinSide 2.. Part of the Sec protein translocase complex. Interacts with the SecYEG preprotein conducting channel. Has a central role in coupling the hydrolysis of ATP to the transfer of proteins into and across the cell membrane, serving both as a receptor for the preprotein-SecB complex and as an ATP-driven molecular motor driving the stepwise translocation of polypeptide chains across the membrane. This is Protein translocase subunit SecA from Paracoccus denitrificans (strain Pd 1222).